Consider the following 1024-residue polypeptide: Beta-galactosidase (1024 aa).

Residues asparagine 103 and aspartate 202 each contribute to the substrate site. Aspartate 202 is a binding site for Na(+). 3 residues coordinate Mg(2+): glutamate 417, histidine 419, and glutamate 462. Substrate is bound by residues glutamate 462 and 538–541 (EYAH). The active-site Proton donor is glutamate 462. Glutamate 538 functions as the Nucleophile in the catalytic mechanism. Position 598 (asparagine 598) interacts with Mg(2+). Na(+) is bound by residues phenylalanine 602 and asparagine 605. Asparagine 605 and tryptophan 1000 together coordinate substrate.

Belongs to the glycosyl hydrolase 2 family. As to quaternary structure, homotetramer. It depends on Mg(2+) as a cofactor. Na(+) serves as cofactor.

It carries out the reaction Hydrolysis of terminal non-reducing beta-D-galactose residues in beta-D-galactosides.. In Escherichia coli O139:H28 (strain E24377A / ETEC), this protein is Beta-galactosidase.